A 776-amino-acid chain; its full sequence is MNNSLENTISFEEYIRVKARSVPQHRMKEFLDSLASKGPEALQEFQQTATTTMVYQQGGNCIYTDSTEVAGSLLELACPVTTSVQPQTQQEQQIQVQQPQQVQVQVQVQQSPQQVSAQLSPQLTVHQPTEQPIQVQVQIQGQAPQSAAPSIQTPSLQSPSPSQLQAAQIQVQHVQAAQQIQAAEIPEEHIPHQQIQAQLVAGQSLAGGQQIQIQTVGALSPPPSQQGSPREGERRVGTASVLQPVKKRKVDMPITVSYAISGQPVATVLAIPQGQQQSYVSLRPDLLTVDSAHLYSATGTITSPTGETWTIPVYSAQPRGDPQQQSITHIAIPQEAYNAVHVSGSPTALAAVKLEDDKEKMVGTTSVVKNSHEEVVQTLANSLFPAQFMNGNIHIPVAVQAVAGTYQNTAQTVHIWDPQQQPQQQTPQEQTPPPQQQQQQLQVTCSAQTVQVAEVEPQSQPQPSPELLLPNSLKPEEGLEVWKNWAQTKNAELEKDAQNRLAPIGRRQLLRFQEDLISSAVAELNYGLCLMTREARNGEGEPYDPDVLYYIFLCIQKYLFENGRVDDIFSDLYYVRFTEWLHEVLKDVQPRVTPLGYVLPSHVTEEMLWECKQLGAHSPSTLLTTLMFFNTKYFLLKTVDQHMKLAFSKVLRQTKKNPSNPKDKSTSIRYLKALGIHQTGQKVTDDMYAEQTENPENPLRCPIKLYDFYLFKCPQSVKGRNDTFYLTPEPVVAPNSPIWYSVQPISREQMGQMLTRILVIREIQEAIAVANASTMH.

At methionine 1 the chain carries N-acetylmethionine. A CARD domain is found at glutamate 6–threonine 48. Disordered stretches follow at residues isoleucine 139–leucine 164 and alanine 218–serine 240. Position 345 is a phosphoserine (serine 345). Residues lysine 353 and lysine 358 each participate in a glycyl lysine isopeptide (Lys-Gly) (interchain with G-Cter in SUMO2) cross-link. Over residues glutamine 419–glutamate 429 the composition is skewed to low complexity. A disordered region spans residues glutamine 419 to leucine 441. A Phosphoserine modification is found at serine 464.

The protein resides in the nucleus. Its subcellular location is the cytoplasm. The protein localises to the cell membrane. In terms of biological role, transcriptional regulator that acts as a mediator of the integrated stress response (ISR) through transcriptional control of protein homeostasis under conditions of ER stress. Controls the outcome of the unfolded protein response (UPR) which is an ER-stress response pathway. ER stress induces QRICH1 translation by a ribosome translation re-initiation mechanism in response to EIF2S1/eIF-2-alpha phosphorylation, and stress-induced QRICH1 regulates a transcriptional program associated with protein translation, protein secretion-mediated proteotoxicity and cell death during the terminal UPR. May cooperate with ATF4 transcription factor signaling to regulate ER homeostasis which is critical for cell viability. Up-regulates CASP3/caspase-3 activity in epithelial cells under ER stress. Central regulator of proteotoxicity associated with ER stress-mediated inflammatory diseases in the intestines and liver. Involved in chondrocyte hypertrophy, a process required for normal longitudinal bone growth. The polypeptide is Transcriptional regulator QRICH1 (Homo sapiens (Human)).